Here is a 384-residue protein sequence, read N- to C-terminus: MTPIQNAQQIFNRQHKNLPEITVYAPGRVNIIGEHTDYNDGFVMPCAINFGTAVSGTKRDDHIWNVYAADLDETDEFSLNVEIPKSEHKWANYVRGVVKFIQERYPDFQQGANLVISGNVPLSSGLSSSAALEVAVGKFCQQLGDLPLSHTDIALNGQKAENQFVGANCGNMDQLISALGQENHLLMIDCRSLETTPTPVPQDVAVIIVNSNVPHDLVTGEYNTRRQQCEEAAKFFGVKALRDVSVEQFQKREAELTALSPLAAKRARHVVTENQRVLDAVEALKNNDLTCLGKLMEASHDSMRDDFEITVPQIDYLVELAQLVIGKSGGARMTGGGFGGCIVALAPHDKVDSVRKIIADNYEKTTGLKETFYVCTASQGVRVI.

34 to 37 contributes to the substrate binding site; the sequence is EHTD. 123–129 is a binding site for ATP; the sequence is SSGLSSS. Mg(2+) contacts are provided by Ser129 and Glu161. The Proton acceptor role is filled by Asp173. Substrate is bound at residue Tyr222.

This sequence belongs to the GHMP kinase family. GalK subfamily.

The protein localises to the cytoplasm. The catalysed reaction is alpha-D-galactose + ATP = alpha-D-galactose 1-phosphate + ADP + H(+). It functions in the pathway carbohydrate metabolism; galactose metabolism. Catalyzes the transfer of the gamma-phosphate of ATP to D-galactose to form alpha-D-galactose-1-phosphate (Gal-1-P). The sequence is that of Galactokinase from Haemophilus influenzae (strain ATCC 51907 / DSM 11121 / KW20 / Rd).